Consider the following 632-residue polypeptide: Effector protein hopAD1 (632 aa).

Residues 13–34 (TAVDSSLPTSATSQTISNTKSR) are disordered. Positions 15 to 32 (VDSSLPTSATSQTISNTK) are enriched in polar residues.

It localises to the secreted. The sequence is that of Effector protein hopAD1 (hopAD1) from Pseudomonas syringae pv. tomato (strain ATCC BAA-871 / DC3000).